The following is a 562-amino-acid chain: Tubby-related protein 2 (562 aa).

Positions 1 to 81 (MDREGPRGPR…RRGEERFQSD (81 aa)) are disordered. Residues 35–46 (QKLEQQRQLFEK) are compositionally biased toward basic and acidic residues. A phosphoserine mark is found at Ser-152, Ser-153, and Ser-155. Residues 179 to 294 (LRRGWLASPG…SNHNAWNMTC (116 aa)) are disordered. Position 211 is a phosphothreonine (Thr-211). Ser-213 is subject to Phosphoserine. Over residues 225–240 (DGDHGDLAPCKVEENT) the composition is skewed to basic and acidic residues. Polar residues predominate over residues 285–294 (SNHNAWNMTC).

It belongs to the TUB family. As to expression, expressed in retina and testis.

It is found in the cytoplasm. Its subcellular location is the secreted. The protein is Tubby-related protein 2 (Tulp2) of Mus musculus (Mouse).